The following is a 273-amino-acid chain: Probable cysteine-rich repeat secretory protein 6 (273 aa).

The first 21 residues, 1–21, serve as a signal peptide directing secretion; the sequence is MTRIIDVSLFCFFLFSLGAMS. 2 Gnk2-homologous domains span residues 22–122 and 128–241; these read QPSQ…DNSF and DSPA…ISAL.

Belongs to the cysteine-rich repeat secretory protein family.

It localises to the secreted. The polypeptide is Probable cysteine-rich repeat secretory protein 6 (CRRSP6) (Arabidopsis thaliana (Mouse-ear cress)).